A 164-amino-acid polypeptide reads, in one-letter code: Thiol peroxidase (164 aa).

The Thioredoxin domain maps to 17–162 (IKVGDTFPDF…YDEVLQAAQA (146 aa)). Cysteine 58 serves as the catalytic Cysteine sulfenic acid (-SOH) intermediate. An intrachain disulfide couples cysteine 58 to cysteine 92.

Belongs to the peroxiredoxin family. Tpx subfamily. As to quaternary structure, homodimer.

It catalyses the reaction a hydroperoxide + [thioredoxin]-dithiol = an alcohol + [thioredoxin]-disulfide + H2O. Functionally, thiol-specific peroxidase that catalyzes the reduction of hydrogen peroxide and organic hydroperoxides to water and alcohols, respectively. Plays a role in cell protection against oxidative stress by detoxifying peroxides. The protein is Thiol peroxidase of Clostridium acetobutylicum (strain ATCC 824 / DSM 792 / JCM 1419 / IAM 19013 / LMG 5710 / NBRC 13948 / NRRL B-527 / VKM B-1787 / 2291 / W).